The chain runs to 514 residues: 2,3-bisphosphoglycerate-independent phosphoglycerate mutase (514 aa).

Mn(2+)-binding residues include aspartate 14 and serine 64. Serine 64 serves as the catalytic Phosphoserine intermediate. Substrate is bound by residues histidine 125, arginine 155–aspartate 156, arginine 187, arginine 193, arginine 263–arginine 266, and lysine 337. Positions 404, 408, 445, 446, and 464 each coordinate Mn(2+).

The protein belongs to the BPG-independent phosphoglycerate mutase family. In terms of assembly, monomer. The cofactor is Mn(2+).

It carries out the reaction (2R)-2-phosphoglycerate = (2R)-3-phosphoglycerate. The protein operates within carbohydrate degradation; glycolysis; pyruvate from D-glyceraldehyde 3-phosphate: step 3/5. Catalyzes the interconversion of 2-phosphoglycerate and 3-phosphoglycerate. The chain is 2,3-bisphosphoglycerate-independent phosphoglycerate mutase from Pseudoalteromonas translucida (strain TAC 125).